The following is a 313-amino-acid chain: Protein FixB (313 aa).

Residue 255-283 (LYLAVGISGQIQHMVGANASQTIFAINKD) participates in FAD binding.

Belongs to the ETF alpha-subunit/FixB family. Heterodimer of FixA and FixB.

It participates in amine and polyamine metabolism; carnitine metabolism. Required for anaerobic carnitine reduction. May bring reductant to CaiA. The chain is Protein FixB from Escherichia coli O17:K52:H18 (strain UMN026 / ExPEC).